The following is a 166-amino-acid chain: Phosphopantetheine adenylyltransferase (166 aa).

A substrate-binding site is contributed by Ser11. Residues 11–12 and His19 contribute to the ATP site; that span reads SF. Residues Lys43, Val80, and Arg94 each coordinate substrate. ATP contacts are provided by residues 95–97, Glu105, and 130–136; these read GLR and VRTVTAT.

It belongs to the bacterial CoaD family. In terms of assembly, homohexamer. Requires Mg(2+) as cofactor.

It localises to the cytoplasm. It catalyses the reaction (R)-4'-phosphopantetheine + ATP + H(+) = 3'-dephospho-CoA + diphosphate. Its pathway is cofactor biosynthesis; coenzyme A biosynthesis; CoA from (R)-pantothenate: step 4/5. In terms of biological role, reversibly transfers an adenylyl group from ATP to 4'-phosphopantetheine, yielding dephospho-CoA (dPCoA) and pyrophosphate. The sequence is that of Phosphopantetheine adenylyltransferase from Chelativorans sp. (strain BNC1).